The primary structure comprises 400 residues: Coiled-coil domain-containing glutamate-rich protein 1 (400 aa).

Residues 1–11 (MTQTVNEREDP) show a composition bias toward basic and acidic residues. Disordered regions lie at residues 1–68 (MTQT…IPGP), 134–164 (RPPG…PPID), and 203–353 (QEKL…DKFL). The span at 31–45 (YHRRQRGAPMSKRRY) shows a compositional bias: basic residues. The span at 46–57 (RDGPKTEYEAPR) shows a compositional bias: basic and acidic residues. Residues 137-157 (GRKKRWGRRGRGLRRHPRRSF) are compositionally biased toward basic residues. Positions 209–220 (QQAALRAHQAQA) are enriched in low complexity. A compositionally biased stretch (polar residues) spans 255–271 (PSLTFSPAPGQQNQSPT). Positions 275 to 347 (VEEEEKNVDD…EAGLEEGEQR (73 aa)) are enriched in acidic residues. Positions 299-335 (EEEEVDGESEDEDVDEEEVEEAGNGEEREEDQEEEDV) form a coiled coil.

It is found in the nucleus. In terms of biological role, regulator of histone epigenetic modifications and chromatin compaction into the sperm head, required for histone-to-protamine (HTP) transition. HTP is a key event in which somatic histones are first replaced by testis-specific histone variants, then transition proteins (TNPs) are incorporated into the spermatid nucleus, and finally protamines (PRMs) replace the TNPs to promote chromatin condensation. The chain is Coiled-coil domain-containing glutamate-rich protein 1 (Ccer1) from Rattus norvegicus (Rat).